The sequence spans 248 residues: Putative insertion sequence ATP-binding protein y4uH (248 aa).

An ATP-binding site is contributed by glycine 106–serine 113.

It belongs to the IS21/IS1162 putative ATP-binding protein family.

The sequence is that of Putative insertion sequence ATP-binding protein y4uH from Sinorhizobium fredii (strain NBRC 101917 / NGR234).